The primary structure comprises 244 residues: MSESSTPNVKYSRVLLKVSGEALMGEKGFGCDVEVLDKLSHDLKEVYDFGIQLCLVVGGGNIFRGASSSSPFGFERASNDYIGMLATMMNALSLQNALEKINVQSRVLSAIPITAVCETYIRRRAIRHLEKGRVVICAAGVGNPFFTTDTAAALRGIEMGCDAIFKGTQVDGVYSADPKKTVDAVRYDRISYRDLLSLDLKIMDVAAVSLAREHSVPIIVFNLGKRGSFADIIRGRGLYTTICN.

An ATP-binding site is contributed by 17-20 (KVSG). Residues 25-30 (GEKGFG) are involved in allosteric activation by GTP. Gly-59 lines the UMP pocket. Gly-60 and Arg-64 together coordinate ATP. Residues Asp-80 and 141 to 148 (VGNPFFTT) contribute to the UMP site. Residues Thr-168, Gln-169, Tyr-174, and Asp-177 each contribute to the ATP site.

The protein belongs to the UMP kinase family. As to quaternary structure, homohexamer.

It localises to the cytoplasm. It catalyses the reaction UMP + ATP = UDP + ADP. The protein operates within pyrimidine metabolism; CTP biosynthesis via de novo pathway; UDP from UMP (UMPK route): step 1/1. Allosterically activated by GTP. Inhibited by UTP. Its function is as follows. Catalyzes the reversible phosphorylation of UMP to UDP. This is Uridylate kinase from Ehrlichia canis (strain Jake).